The primary structure comprises 403 residues: Phosphoglycerate kinase (403 aa).

Residues 24–26, arginine 39, 62–65, arginine 121, and arginine 161 contribute to the substrate site; these read DLN and HLGR. Residues lysine 211, glycine 299, glutamate 330, and 359 to 362 each bind ATP; that span reads GGDS.

The protein belongs to the phosphoglycerate kinase family. In terms of assembly, monomer.

It is found in the cytoplasm. The catalysed reaction is (2R)-3-phosphoglycerate + ATP = (2R)-3-phospho-glyceroyl phosphate + ADP. It participates in carbohydrate degradation; glycolysis; pyruvate from D-glyceraldehyde 3-phosphate: step 2/5. The chain is Phosphoglycerate kinase from Rhodococcus jostii (strain RHA1).